A 314-amino-acid chain; its full sequence is Porphobilinogen deaminase (314 aa).

Residue C234 is modified to S-(dipyrrolylmethanemethyl)cysteine.

It belongs to the HMBS family. In terms of assembly, monomer. It depends on dipyrromethane as a cofactor.

The catalysed reaction is 4 porphobilinogen + H2O = hydroxymethylbilane + 4 NH4(+). Its pathway is porphyrin-containing compound metabolism; protoporphyrin-IX biosynthesis; coproporphyrinogen-III from 5-aminolevulinate: step 2/4. Tetrapolymerization of the monopyrrole PBG into the hydroxymethylbilane pre-uroporphyrinogen in several discrete steps. In Mycobacterium marinum (strain ATCC BAA-535 / M), this protein is Porphobilinogen deaminase.